The primary structure comprises 414 residues: Serine/threonine transporter SstT (414 aa).

Transmembrane regions (helical) follow at residues 16 to 36 (GSLV…AWIS), 46 to 66 (LGTL…LMLV), 84 to 104 (ILFL…VFSF), 143 to 163 (ALLN…GFAL), 180 to 200 (AVTF…FGLV), 219 to 239 (LVVL…LLVF), 300 to 320 (MAGA…TLGV), and 332 to 352 (VVAS…LLLI).

The protein belongs to the dicarboxylate/amino acid:cation symporter (DAACS) (TC 2.A.23) family.

Its subcellular location is the cell inner membrane. It catalyses the reaction L-serine(in) + Na(+)(in) = L-serine(out) + Na(+)(out). The enzyme catalyses L-threonine(in) + Na(+)(in) = L-threonine(out) + Na(+)(out). Involved in the import of serine and threonine into the cell, with the concomitant import of sodium (symport system). The protein is Serine/threonine transporter SstT of Salmonella dublin (strain CT_02021853).